A 361-amino-acid chain; its full sequence is Protein Wnt-2 (361 aa).

An N-terminal signal peptide occupies residues 1–27 (MNASVLGLCLSGPLVLLLAWLAPPVTS). 11 disulfides stabilise this stretch: C77/C88, C128/C136, C138/C158, C207/C221, C209/C216, C279/C310, C295/C305, C309/C349, C325/C340, C327/C337, and C332/C333. S213 is lipidated: O-palmitoleoyl serine; by PORCN. A glycan (N-linked (GlcNAc...) asparagine) is linked at N296.

Belongs to the Wnt family. Palmitoleoylation is required for efficient binding to frizzled receptors. Depalmitoleoylation leads to Wnt signaling pathway inhibition.

The protein localises to the secreted. It localises to the extracellular space. Its subcellular location is the extracellular matrix. Its function is as follows. Ligand for members of the frizzled family of seven transmembrane receptors. Probable developmental protein. May be a signaling molecule which affects the development of discrete regions of tissues. Is likely to signal over only few cell diameters. The polypeptide is Protein Wnt-2 (WNT2) (Ornithorhynchus anatinus (Duckbill platypus)).